The following is a 333-amino-acid chain: Nucleoid-associated protein PSPTO_1265 (333 aa).

Belongs to the YejK family.

It localises to the cytoplasm. It is found in the nucleoid. The polypeptide is Nucleoid-associated protein PSPTO_1265 (Pseudomonas syringae pv. tomato (strain ATCC BAA-871 / DC3000)).